The sequence spans 351 residues: Phospho-N-acetylmuramoyl-pentapeptide-transferase (351 aa).

A run of 10 helical transmembrane segments spans residues 3–23 (GIIA…PPLI), 51–71 (TMGG…AHAV), 76–96 (PTVS…VGFL), 113–133 (GAKM…VTMF), 152–172 (FGPP…IVAT), 181–201 (GLDG…VIIG), 223–243 (PLDL…FLWF), 250–270 (IFMG…LAIT), 275–295 (LLLL…IIQV), and 329–349 (FWII…LEWM).

Belongs to the glycosyltransferase 4 family. MraY subfamily. It depends on Mg(2+) as a cofactor.

The protein resides in the cell membrane. It catalyses the reaction UDP-N-acetyl-alpha-D-muramoyl-L-alanyl-gamma-D-glutamyl-meso-2,6-diaminopimeloyl-D-alanyl-D-alanine + di-trans,octa-cis-undecaprenyl phosphate = di-trans,octa-cis-undecaprenyl diphospho-N-acetyl-alpha-D-muramoyl-L-alanyl-D-glutamyl-meso-2,6-diaminopimeloyl-D-alanyl-D-alanine + UMP. The protein operates within cell wall biogenesis; peptidoglycan biosynthesis. In terms of biological role, catalyzes the initial step of the lipid cycle reactions in the biosynthesis of the cell wall peptidoglycan: transfers peptidoglycan precursor phospho-MurNAc-pentapeptide from UDP-MurNAc-pentapeptide onto the lipid carrier undecaprenyl phosphate, yielding undecaprenyl-pyrophosphoryl-MurNAc-pentapeptide, known as lipid I. This Thermobifida fusca (strain YX) protein is Phospho-N-acetylmuramoyl-pentapeptide-transferase.